Consider the following 226-residue polypeptide: Endonuclease V (226 aa).

Residues Asp-43 and Asp-109 each contribute to the Mg(2+) site.

The protein belongs to the endonuclease V family. Mg(2+) serves as cofactor.

It is found in the cytoplasm. The enzyme catalyses Endonucleolytic cleavage at apurinic or apyrimidinic sites to products with a 5'-phosphate.. Its function is as follows. DNA repair enzyme involved in the repair of deaminated bases. Selectively cleaves double-stranded DNA at the second phosphodiester bond 3' to a deoxyinosine leaving behind the intact lesion on the nicked DNA. The protein is Endonuclease V of Kosmotoga olearia (strain ATCC BAA-1733 / DSM 21960 / TBF 19.5.1).